The chain runs to 141 residues: MRVLGIDYGDSRIGIAISDPLGWTAQALETITWRSDVEVPLKRISELVEEYGVKTVIVGFPKNMDGTVGARGEKTIEFIDLLQQRIKDIEVIKWDERLTTVAANRTMYEMGIKKSKKKLVVDQIAAVYILQGYLDSKGKVL.

This sequence belongs to the YqgF nuclease family.

The protein resides in the cytoplasm. Could be a nuclease involved in processing of the 5'-end of pre-16S rRNA. In Acetivibrio thermocellus (strain ATCC 27405 / DSM 1237 / JCM 9322 / NBRC 103400 / NCIMB 10682 / NRRL B-4536 / VPI 7372) (Clostridium thermocellum), this protein is Putative pre-16S rRNA nuclease.